The primary structure comprises 370 residues: N-acetyltaurine hydrolase (370 aa).

Positions 26, 28, 189, 221, 250, and 318 each coordinate a divalent metal cation.

It belongs to the metallo-dependent hydrolases superfamily. Phosphotriesterase family. The cofactor is a divalent metal cation.

Its subcellular location is the cytoplasm. It is found in the cytosol. It catalyses the reaction N-acetyltaurine + H2O = taurine + acetate. In terms of biological role, N-acetyltaurine hydrolase catalyzes the hydrolysis of N-acetyltaurine into taurine and acetate. The polypeptide is N-acetyltaurine hydrolase (pter) (Dictyostelium discoideum (Social amoeba)).